The primary structure comprises 337 residues: Anthranilate phosphoribosyltransferase (337 aa).

Residues Gly81, 84 to 85 (GD), Ser89, 91 to 94 (NVST), 109 to 117 (KHGNRALSS), and Ala121 contribute to the 5-phospho-alpha-D-ribose 1-diphosphate site. Gly81 serves as a coordination point for anthranilate. Ser93 is a Mg(2+) binding site. Asn112 is a binding site for anthranilate. Arg167 is a binding site for anthranilate. Residues Asp226 and Glu227 each coordinate Mg(2+).

This sequence belongs to the anthranilate phosphoribosyltransferase family. In terms of assembly, homodimer. The cofactor is Mg(2+).

It carries out the reaction N-(5-phospho-beta-D-ribosyl)anthranilate + diphosphate = 5-phospho-alpha-D-ribose 1-diphosphate + anthranilate. The protein operates within amino-acid biosynthesis; L-tryptophan biosynthesis; L-tryptophan from chorismate: step 2/5. Its function is as follows. Catalyzes the transfer of the phosphoribosyl group of 5-phosphorylribose-1-pyrophosphate (PRPP) to anthranilate to yield N-(5'-phosphoribosyl)-anthranilate (PRA). This Nitrobacter hamburgensis (strain DSM 10229 / NCIMB 13809 / X14) protein is Anthranilate phosphoribosyltransferase.